Consider the following 245-residue polypeptide: DNA polymerase sliding clamp (245 aa).

The protein belongs to the PCNA family. Homotrimer. The subunits circularize to form a toroid; DNA passes through its center. Replication factor C (RFC) is required to load the toroid on the DNA.

In terms of biological role, sliding clamp subunit that acts as a moving platform for DNA processing. Responsible for tethering the catalytic subunit of DNA polymerase and other proteins to DNA during high-speed replication. The protein is DNA polymerase sliding clamp of Methanosarcina mazei (strain ATCC BAA-159 / DSM 3647 / Goe1 / Go1 / JCM 11833 / OCM 88) (Methanosarcina frisia).